Here is a 288-residue protein sequence, read N- to C-terminus: ATP synthase gamma chain (288 aa).

It belongs to the ATPase gamma chain family. F-type ATPases have 2 components, CF(1) - the catalytic core - and CF(0) - the membrane proton channel. CF(1) has five subunits: alpha(3), beta(3), gamma(1), delta(1), epsilon(1). CF(0) has three main subunits: a, b and c.

It localises to the cell membrane. Functionally, produces ATP from ADP in the presence of a proton gradient across the membrane. The gamma chain is believed to be important in regulating ATPase activity and the flow of protons through the CF(0) complex. The sequence is that of ATP synthase gamma chain from Staphylococcus epidermidis (strain ATCC 35984 / DSM 28319 / BCRC 17069 / CCUG 31568 / BM 3577 / RP62A).